Here is a 481-residue protein sequence, read N- to C-terminus: Cardiolipin synthase A (481 aa).

2 helical membrane-spanning segments follow: residues 10–30 (FFGY…LHAL) and 40–60 (IAWA…YLIF). 2 consecutive PLD phosphodiesterase domains span residues 220-247 (VNFR…GDEY) and 394-421 (QPGF…DNRS). Catalysis depends on residues His225, Lys227, Asp232, His399, Lys401, and Asp406.

This sequence belongs to the phospholipase D family. Cardiolipin synthase subfamily. ClsA sub-subfamily.

Its subcellular location is the cell inner membrane. It catalyses the reaction 2 a 1,2-diacyl-sn-glycero-3-phospho-(1'-sn-glycerol) = a cardiolipin + glycerol. In terms of biological role, catalyzes the reversible phosphatidyl group transfer from one phosphatidylglycerol molecule to another to form cardiolipin (CL) (diphosphatidylglycerol) and glycerol. The sequence is that of Cardiolipin synthase A from Pseudomonas putida (Arthrobacter siderocapsulatus).